Here is a 427-residue protein sequence, read N- to C-terminus: MDNFQGDLTDVVRGIGSGHVSPSPGPPEGPSPSSMSPPPTSDLHVEFPSAATSASCLANPFGDPFVSMKDPLIHLPASYISGAGDNKSNKSFAIFPKIFEDDHIKSQCSVFPRIKISQSNNIHDASTCNSPAITVSSAAVAASPWGMINVNTTNSPRNCLLVDNNNNTSSCSQVQISSSPRNLGIKRRKSQAKKVVCIPAPAAMNSRSSGEVVPSDLWAWRKYGQKPIKGSPYPRGYYRCSSSKGCSARKQVERSRTDPNMLVITYTSEHNHPWPTQRNALAGSTRSSSSSSLNPSSKSSTAAATTSPSSRVFQNNSSKDEPNNSNLPSSSTHPPFDAAAIKEENVEERQEKMEFDYNDVENTYRPELLQEFQHQPEDFFADLDELEGDSLTMLLSHSSGGGNMENKTTIPDVFSDFFDDDESSRSL.

2 disordered regions span residues 1 to 45 and 266 to 336; these read MDNF…DLHV and YTSE…HPPF. Residues 23–40 show a composition bias toward pro residues; sequence SPGPPEGPSPSSMSPPPT. A DNA-binding region (WRKY) is located at residues 209 to 275; that stretch reads SGEVVPSDLW…YTSEHNHPWP (67 aa). Positions 284 to 310 are enriched in low complexity; that stretch reads STRSSSSSSLNPSSKSSTAAATTSPSS. Residues 311–333 are compositionally biased toward polar residues; sequence RVFQNNSSKDEPNNSNLPSSSTH.

The protein belongs to the WRKY group II-e family.

It is found in the nucleus. Its function is as follows. Transcription factor. Interacts specifically with the W box (5'-(T)TGAC[CT]-3'), a frequently occurring elicitor-responsive cis-acting element. The polypeptide is Probable WRKY transcription factor 35 (WRKY35) (Arabidopsis thaliana (Mouse-ear cress)).